The following is a 295-amino-acid chain: Bifunctional protein FolD (295 aa).

Residues 166 to 168 (GRS), Ser195, and Ile236 contribute to the NADP(+) site.

This sequence belongs to the tetrahydrofolate dehydrogenase/cyclohydrolase family. In terms of assembly, homodimer.

The enzyme catalyses (6R)-5,10-methylene-5,6,7,8-tetrahydrofolate + NADP(+) = (6R)-5,10-methenyltetrahydrofolate + NADPH. The catalysed reaction is (6R)-5,10-methenyltetrahydrofolate + H2O = (6R)-10-formyltetrahydrofolate + H(+). It participates in one-carbon metabolism; tetrahydrofolate interconversion. In terms of biological role, catalyzes the oxidation of 5,10-methylenetetrahydrofolate to 5,10-methenyltetrahydrofolate and then the hydrolysis of 5,10-methenyltetrahydrofolate to 10-formyltetrahydrofolate. This Pelodictyon phaeoclathratiforme (strain DSM 5477 / BU-1) protein is Bifunctional protein FolD.